Consider the following 179-residue polypeptide: Large ribosomal subunit protein uL5 (179 aa).

Belongs to the universal ribosomal protein uL5 family. Part of the 50S ribosomal subunit; part of the 5S rRNA/L5/L18/L25 subcomplex. Contacts the 5S rRNA and the P site tRNA. Forms a bridge to the 30S subunit in the 70S ribosome.

This is one of the proteins that bind and probably mediate the attachment of the 5S RNA into the large ribosomal subunit, where it forms part of the central protuberance. In the 70S ribosome it contacts protein S13 of the 30S subunit (bridge B1b), connecting the 2 subunits; this bridge is implicated in subunit movement. Contacts the P site tRNA; the 5S rRNA and some of its associated proteins might help stabilize positioning of ribosome-bound tRNAs. In Shewanella sp. (strain ANA-3), this protein is Large ribosomal subunit protein uL5.